The chain runs to 458 residues: Ammonium transporter Rh type B (458 aa).

Topologically, residues 1-13 (MAGSPSRAAGRRL) are cytoplasmic. The chain crosses the membrane as a helical span at residues 14-34 (QLPLLCLFLQGATAVLFAVFV). Residues 35–61 (RYNHKTDAALWHRSNHSNADNEFYFRY) are Extracellular-facing. N-linked (GlcNAc...) asparagine glycosylation occurs at asparagine 49. Residues 62-82 (PSFQDVHAMVFVGFGFLMVFL) traverse the membrane as a helical segment. Over 83–86 (QRYG) the chain is Cytoplasmic. The chain crosses the membrane as a helical span at residues 87-107 (FSSVGFTFLLAAFALQWSTLV). The Extracellular portion of the chain corresponds to 108–124 (QGFLHSFHGGHIHVGVE). A helical transmembrane segment spans residues 125–145 (SMINADFCAGAVLISFGAVLG). Over 146-149 (KTGP) the chain is Cytoplasmic. A helical transmembrane segment spans residues 150 to 170 (AQLLLMALLEVVLFGINEFVL). The Extracellular portion of the chain corresponds to 171–178 (LHLLGVRD). A helical transmembrane segment spans residues 179-201 (AGGSMTIHTFGAYFGLVLSRVLY). The Cytoplasmic segment spans residues 202-219 (RPQLEKSKHRQGSVYHSD). A helical transmembrane segment spans residues 220–240 (LFTMIGTIFLWIFWPSFNAAL). The Extracellular portion of the chain corresponds to 241–251 (TALGAGQHRTA). A helical transmembrane segment spans residues 252 to 272 (LNTYYSLAASTLGTFALSALV). The Cytoplasmic portion of the chain corresponds to 273 to 282 (GEDGRLDMVH). A helical membrane pass occupies residues 283–303 (IQNAALTGGVVVGTSSKMMLT). Proline 304 is a topological domain (extracellular). A helical membrane pass occupies residues 305–325 (FGALAAGFLAGTVSTLGYKFF). Residues 326 to 346 (TPILESKFKVQDTCGVHNLHG) lie on the Cytoplasmic side of the membrane. The chain crosses the membrane as a helical span at residues 347–367 (MPGVLGALLGVLVAGLATHEA). Topologically, residues 368 to 393 (YGDGLESVFPLIAEGQRSATSQAMHQ) are extracellular. The chain crosses the membrane as a helical span at residues 394–414 (LFGLFVTLMFASVGGGLGGLL). Residues 415–458 (LKLPFLDSPPDSQCYEDQVHWQVPGEHEDKAQRPLRVEEADTYA) are Cytoplasmic-facing. The interaction with ANK3 stretch occupies residues 416–424 (KLPFLDSPP). Positions 429-432 (YEDQ) match the Basolateral sorting signal motif. A disordered region spans residues 439–458 (GEHEDKAQRPLRVEEADTYA).

It belongs to the ammonium transporter (TC 2.A.49) family. Rh subfamily. In terms of assembly, interacts (via C-terminus) with ANK2 and ANK3; required for targeting to the basolateral membrane. In terms of processing, N-glycosylated.

The protein localises to the cell membrane. It is found in the basolateral cell membrane. The enzyme catalyses NH4(+)(in) = NH4(+)(out). It carries out the reaction methylamine(out) = methylamine(in). The catalysed reaction is CO2(out) = CO2(in). Ammonium transporter involved in the maintenance of acid-base homeostasis. Transports ammonium and its related derivative methylammonium across the basolateral plasma membrane of epithelial cells likely contributing to renal transepithelial ammonia transport and ammonia metabolism. May transport either NH4(+) or NH3 ammonia species predominantly mediating an electrogenic NH4(+) transport. May act as a CO2 channel providing for renal acid secretion. In Gorilla gorilla gorilla (Western lowland gorilla), this protein is Ammonium transporter Rh type B (RHBG).